A 563-amino-acid polypeptide reads, in one-letter code: Eukaryotic translation initiation factor 3 subunit D (563 aa).

The tract at residues 95–136 (PGYMRNRNRFNQRGGYRRDNRGGRFQGQGGNMGMQNLSRGRD) is disordered. The interval 294–308 (EFDLLTVGETANDLN) is RNA gate. The segment at 528 to 563 (IPNSTFETDEEDDDDDEDDVENDDGDDEKDEGDGED) is disordered. Residues 534–563 (ETDEEDDDDDEDDVENDDGDDEKDEGDGED) are compositionally biased toward acidic residues.

The protein belongs to the eIF-3 subunit D family. As to quaternary structure, component of the eukaryotic translation initiation factor 3 (eIF-3) complex.

It is found in the cytoplasm. In terms of biological role, mRNA cap-binding component of the eukaryotic translation initiation factor 3 (eIF-3) complex, which is involved in protein synthesis of a specialized repertoire of mRNAs and, together with other initiation factors, stimulates binding of mRNA and methionyl-tRNAi to the 40S ribosome. The eIF-3 complex specifically targets and initiates translation of a subset of mRNAs involved in cell proliferation. In the eIF-3 complex, eif3d specifically recognizes and binds the 7-methylguanosine cap of a subset of mRNAs. This is Eukaryotic translation initiation factor 3 subunit D from Nematostella vectensis (Starlet sea anemone).